The chain runs to 603 residues: Baeyer-Villiger monooxygenase (603 aa).

FAD-binding positions include glutamate 94, 102 to 105, aspartate 114, tyrosine 120, and valine 164; that span reads TWYW. 112–114 provides a ligand contact to NADP(+); it reads HCD. NADP(+)-binding positions include 248 to 254, 271 to 272, and 386 to 387; these read TGATGVQ, RT, and KR.

This sequence belongs to the FAD-binding monooxygenase family. It depends on FAD as a cofactor.

Its function is as follows. Catalyzes a Baeyer-Villiger oxidation reaction, i.e. the insertion of an oxygen atom into a carbon-carbon bond adjacent to a carbonyl, which converts ketones to esters or lactones using NADPH and/or NADH as an electron donor. Thus, can convert bicyclo[3.2.0]hept-2-en-6-one into the oxidative lactone products 2-oxabicyclo[3.3.0]oct-6-en-3-one and 3-oxabicyclo[3.3.0]oct-6-en-2-one. Is also able to catalyze the sulfoxidation of methyl phenyl sulfide (thioanisole). In Streptomyces coelicolor (strain ATCC BAA-471 / A3(2) / M145), this protein is Baeyer-Villiger monooxygenase.